Here is a 770-residue protein sequence, read N- to C-terminus: Penicillin-binding protein 1C (770 aa).

At 1 to 8 the chain is on the cytoplasmic side; the sequence is MPRLLTKR. The chain crosses the membrane as a helical; Signal-anchor for type II membrane protein span at residues 9 to 29; sequence GCWITLAAAPFLLFLAAWGAD. The Periplasmic segment spans residues 30–770; the sequence is KLWPLPLHEV…QIATVKFVMQ (741 aa). A transglycosylase region spans residues 43–213; sequence RVVVAQDGTP…SRLRPDRWPE (171 aa). The Proton donor; for transglycosylase activity role is filled by glutamate 84. The tract at residues 278 to 559 is transpeptidase; the sequence is AGLQRRLEEL…FASAVPLLNQ (282 aa). Serine 342 (acyl-ester intermediate; for transpeptidase activity) is an active-site residue.

It in the N-terminal section; belongs to the glycosyltransferase 51 family. The protein in the C-terminal section; belongs to the transpeptidase family.

It localises to the cell inner membrane. It carries out the reaction [GlcNAc-(1-&gt;4)-Mur2Ac(oyl-L-Ala-gamma-D-Glu-L-Lys-D-Ala-D-Ala)](n)-di-trans,octa-cis-undecaprenyl diphosphate + beta-D-GlcNAc-(1-&gt;4)-Mur2Ac(oyl-L-Ala-gamma-D-Glu-L-Lys-D-Ala-D-Ala)-di-trans,octa-cis-undecaprenyl diphosphate = [GlcNAc-(1-&gt;4)-Mur2Ac(oyl-L-Ala-gamma-D-Glu-L-Lys-D-Ala-D-Ala)](n+1)-di-trans,octa-cis-undecaprenyl diphosphate + di-trans,octa-cis-undecaprenyl diphosphate + H(+). The protein operates within cell wall biogenesis; peptidoglycan biosynthesis. Transglycosylase activity can be inhibited by moenomycin. In terms of biological role, cell wall formation. The enzyme has a penicillin-insensitive transglycosylase N-terminal domain (formation of linear glycan strands) and a transpeptidase C-terminal domain which may not be functional. The protein is Penicillin-binding protein 1C (pbpC) of Escherichia coli (strain K12).